Reading from the N-terminus, the 229-residue chain is Large ribosomal subunit protein uL1 (229 aa).

This sequence belongs to the universal ribosomal protein uL1 family. In terms of assembly, part of the 50S ribosomal subunit.

Functionally, binds directly to 23S rRNA. The L1 stalk is quite mobile in the ribosome, and is involved in E site tRNA release. Its function is as follows. Protein L1 is also a translational repressor protein, it controls the translation of the L11 operon by binding to its mRNA. The polypeptide is Large ribosomal subunit protein uL1 (Haemophilus influenzae (strain 86-028NP)).